The chain runs to 306 residues: Ornithine carbamoyltransferase (306 aa).

Carbamoyl phosphate contacts are provided by residues 53–56, Q80, R104, and 131–134; these read STRT and HPCQ. L-ornithine is bound by residues N162, D219, and 223-224; that span reads SM. Residues 259-260 and R287 each bind carbamoyl phosphate; that span reads CL.

This sequence belongs to the aspartate/ornithine carbamoyltransferase superfamily. OTCase family.

Its subcellular location is the cytoplasm. It catalyses the reaction carbamoyl phosphate + L-ornithine = L-citrulline + phosphate + H(+). It participates in amino-acid biosynthesis; L-arginine biosynthesis; L-arginine from L-ornithine and carbamoyl phosphate: step 1/3. Its function is as follows. Reversibly catalyzes the transfer of the carbamoyl group from carbamoyl phosphate (CP) to the N(epsilon) atom of ornithine (ORN) to produce L-citrulline. This chain is Ornithine carbamoyltransferase, found in Acinetobacter baylyi (strain ATCC 33305 / BD413 / ADP1).